Reading from the N-terminus, the 357-residue chain is uncharacterized protein (357 aa).

The PNPLA domain maps to 27 to 196 (LVCEGGGQRG…SDAIPVKEAA (170 aa)). The short motif at 31-36 (GGGQRG) is the GXGXXG element. A GXSXG motif is present at residues 59 to 63 (GTSAG). Catalysis depends on Ser61, which acts as the Nucleophile. The active-site Proton acceptor is Asp183. The short motif at 183–185 (DGG) is the DGA/G element.

Probable lipid hydrolase. This is an uncharacterized protein from Escherichia coli (strain K12).